The following is a 38-amino-acid chain: FEMQYCWSHSGVCRDKSERNNKPMAWTYCENRQKKCEF.

2 disulfides stabilise this stretch: Cys-6/Cys-36 and Cys-13/Cys-29.

As to expression, produced by the crural gland and detected in venom from the spur located on each male hind leg.

The protein localises to the secreted. In terms of biological role, does not show antimicrobial, myotoxic, hemolytic and cell-promoting activities. The chain is Defensin-like peptide 3 from Ornithorhynchus anatinus (Duckbill platypus).